The following is a 377-amino-acid chain: Formate dehydrogenase, mitochondrial (377 aa).

The transit peptide at 1–29 (MAAMWRAAARQLVDRAVGSRAAHTSAGSK) directs the protein to the mitochondrion. Ile-121 and Asn-145 together coordinate substrate. NAD(+)-binding positions include Thr-146, Asp-220, 255 to 259 (PLTEK), Asn-281, Asp-307, and 331 to 334 (HISG).

The protein belongs to the D-isomer specific 2-hydroxyacid dehydrogenase family. FDH subfamily. In terms of assembly, homodimer.

The protein resides in the mitochondrion. The catalysed reaction is formate + NAD(+) = CO2 + NADH. Catalyzes the NAD(+)-dependent oxidation of formate to carbon dioxide. Involved in the cell stress response. This is Formate dehydrogenase, mitochondrial from Hordeum vulgare (Barley).